Reading from the N-terminus, the 400-residue chain is Protection of telomeres homolog 1 (400 aa).

The protein belongs to the telombin family. Expressed in sperm and oocytes.

It localises to the nucleus. The protein resides in the nucleus envelope. It is found in the chromosome. Its subcellular location is the telomere. In terms of biological role, telomeric DNA-binding protein, which binds to single-stranded C-rich repeat sequences, with high specificity to the 5'-GCCTAA-3' sequence. Repeat sequence binding can be at the 5' or 3' telomeric end. May have a role in protecting the 5' end of the C-rich strand of the telomere. Acts redundantly with pot-2 to negatively regulate telomerase-mediated telomere extension. Also regulates telomere length by the telomerase-independent telomere maintenance pathway called ALT (alternative lengthening of telomeres). Through sun-1, anchors telomeres to the nuclear envelope in embryos. This Caenorhabditis elegans protein is Protection of telomeres homolog 1.